The following is a 168-amino-acid chain: Cofilin-1-A (168 aa).

Ala2 bears the N-acetylalanine mark. One can recognise an ADF-H domain in the interval 4-153 (GVMVSDDVIK…NDPCNLADKL (150 aa)). The short motif at 30–34 (KKRKK) is the Nuclear localization signal element.

Belongs to the actin-binding proteins ADF family. Inactive when phosphorylated. Phosphorylation levels vary during development. Oocytes contain only the phosphorylated form, and 80-95% of cfl1 protein is phosphorylated in unfertilized eggs. Rapid dephosphorylation occurs within 30 minutes after fertilization. Phosphorylation levels increase again between the morula and blastula stages (5-8 hpf) and then decrease again as gastrulation approaches. Dephosphorylated by pdxp. In terms of tissue distribution, expressed diffusely in both animal and vegetal hemispheres of the oocyte. During cleavage, expression accumulates around the cleavage furrow, along the vegetal membrane, and later in the midbody. Strongly expressed in the animal hemisphere during blastula stages, with most cells showing expression by gastrulation. By stage 17, expression is highest in cells of the developing neuroectoderm, and at stage 24 the notochord, neural tube, neural crest, somites and some cells of the archenteron show high expression. By stage 35, expression has declined in the notochord, but remains in the neural tube, epidermis and a layer of cells in the archenteron. Also highly expressed in the retina and neuronal cell bodies at the base of the cement gland but not the cement gland itself. At stage 38, expression is widespread, being highest in the nervous system and retina. In the adult, expression is high in the brain, heart, oocyte, stomach, and low in skeletal muscle.

The protein localises to the nucleus matrix. The protein resides in the cytoplasm. It is found in the cytoskeleton. Its subcellular location is the cell cortex. It localises to the membrane. Its function is as follows. May play a role in the regulation of cell morphology and cytoskeletal organization. Binds to F-actin and exhibits pH-sensitive F-actin depolymerizing activity. Required for formation of the cleavage furrow during cytokinesis. The protein is Cofilin-1-A (cfl1-a) of Xenopus laevis (African clawed frog).